The following is a 496-amino-acid chain: Chaperone SurA (496 aa).

The first 42 residues, 1–42, serve as a signal peptide directing secretion; that stretch reads MACKSTAVRSATRVAPTRRLGMVTGALVALMAGAALLPAAHA. Positions 53-80 are disordered; it reads RGIFTTPDASPSQPLLRGTLPGPSTASG. 2 PpiC domains span residues 235 to 337 and 349 to 447; these read VQEY…KLVD and VAQT…QVEG.

The protein localises to the periplasm. The enzyme catalyses [protein]-peptidylproline (omega=180) = [protein]-peptidylproline (omega=0). In terms of biological role, chaperone involved in the correct folding and assembly of outer membrane proteins. Recognizes specific patterns of aromatic residues and the orientation of their side chains, which are found more frequently in integral outer membrane proteins. May act in both early periplasmic and late outer membrane-associated steps of protein maturation. The sequence is that of Chaperone SurA from Ralstonia nicotianae (strain ATCC BAA-1114 / GMI1000) (Ralstonia solanacearum).